Here is a 473-residue protein sequence, read N- to C-terminus: uncharacterized protein (473 aa).

The N-terminal stretch at 1–19 (MIRAFLVFPYLYILVQSNG) is a signal peptide.

This is an uncharacterized protein from Methanocaldococcus jannaschii (strain ATCC 43067 / DSM 2661 / JAL-1 / JCM 10045 / NBRC 100440) (Methanococcus jannaschii).